The sequence spans 286 residues: tRNA dimethylallyltransferase (286 aa).

The tract at residues 18 to 21 (DSMQ) is interaction with substrate tRNA.

It belongs to the IPP transferase family. Monomer. Mg(2+) is required as a cofactor.

It carries out the reaction adenosine(37) in tRNA + dimethylallyl diphosphate = N(6)-dimethylallyladenosine(37) in tRNA + diphosphate. Catalyzes the transfer of a dimethylallyl group onto the adenine at position 37 in tRNAs that read codons beginning with uridine, leading to the formation of N6-(dimethylallyl)adenosine (i(6)A). The chain is tRNA dimethylallyltransferase from Tropheryma whipplei (strain TW08/27) (Whipple's bacillus).